The sequence spans 193 residues: Potassium-transporting ATPase KdpC subunit (193 aa).

A helical membrane pass occupies residues 7 to 27; that stretch reads PLVVLFVILTAVTGLAYPAVM.

This sequence belongs to the KdpC family. As to quaternary structure, the system is composed of three essential subunits: KdpA, KdpB and KdpC.

Its subcellular location is the cell inner membrane. In terms of biological role, part of the high-affinity ATP-driven potassium transport (or Kdp) system, which catalyzes the hydrolysis of ATP coupled with the electrogenic transport of potassium into the cytoplasm. This subunit acts as a catalytic chaperone that increases the ATP-binding affinity of the ATP-hydrolyzing subunit KdpB by the formation of a transient KdpB/KdpC/ATP ternary complex. This Burkholderia cenocepacia (strain ATCC BAA-245 / DSM 16553 / LMG 16656 / NCTC 13227 / J2315 / CF5610) (Burkholderia cepacia (strain J2315)) protein is Potassium-transporting ATPase KdpC subunit.